Reading from the N-terminus, the 690-residue chain is Polyphosphate kinase (690 aa).

N45 is an ATP binding site. Mg(2+) contacts are provided by R375 and R405. H435 acts as the Phosphohistidine intermediate in catalysis. Residues Y468, R564, and H592 each coordinate ATP.

Belongs to the polyphosphate kinase 1 (PPK1) family. The cofactor is Mg(2+). In terms of processing, an intermediate of this reaction is the autophosphorylated ppk in which a phosphate is covalently linked to a histidine residue through a N-P bond.

It catalyses the reaction [phosphate](n) + ATP = [phosphate](n+1) + ADP. Its function is as follows. Catalyzes the reversible transfer of the terminal phosphate of ATP to form a long-chain polyphosphate (polyP). The chain is Polyphosphate kinase from Pseudomonas aeruginosa (strain ATCC 15692 / DSM 22644 / CIP 104116 / JCM 14847 / LMG 12228 / 1C / PRS 101 / PAO1).